The following is a 173-amino-acid chain: Globin, cuticular isoform (173 aa).

Residues 1 to 16 (MLWFVAVCFAIASVSA) form the signal peptide. Residues 17-166 (MSPADVKKHT…FNSEAQHQLE (150 aa)) form the Globin domain. Residue His113 coordinates heme b.

Belongs to the globin family. As to expression, expressed only by adult nematodes in the gut.

It localises to the secreted. The protein localises to the extracellular space. The sequence is that of Globin, cuticular isoform (GLBC) from Nippostrongylus brasiliensis (Rat hookworm).